A 440-amino-acid chain; its full sequence is uncharacterized protein (440 aa).

Positions 1–29 (MLRLQMMEGLIVKRTLLLILLLVISVSYA) are cleaved as a signal peptide.

It belongs to the Mj S-layer protein family.

This is an uncharacterized protein from Methanocaldococcus jannaschii (strain ATCC 43067 / DSM 2661 / JAL-1 / JCM 10045 / NBRC 100440) (Methanococcus jannaschii).